Consider the following 332-residue polypeptide: MTQAADARDRPVLVIAGPTCSGKSALAMAVARAVDGTIVNADSMQVYRDLRILTARPTPADEAECPHRLYGVLPATETGSVAWWRGRAVAEIEAAWAAGRTPILCGGTGMYLRALTDGLTDIPDPGPEARAEARRLVDAEGPAALHDRLAAVDPESAAALHPADSQRVARAWEVWSGTGHGMAHWRRTATLPPLACRRVAVRLDPPRDTLRAAIAVRFAAMVQGGALDEVRALLAQGLPPALPAMRAHGVPELAAHLRGDLTLDEATHRAVLATGRYTRRQSTWFAHHDLAGPADSLVIGTRMGGDAQQMERNYADAVSFILMRIDVGRQFP.

17-24 (GPTCSGKS) contributes to the ATP binding site. 19–24 (TCSGKS) contacts substrate. 2 interaction with substrate tRNA regions span residues 42-45 (DSMQ) and 166-170 (QRVAR).

Belongs to the IPP transferase family. As to quaternary structure, monomer. The cofactor is Mg(2+).

It carries out the reaction adenosine(37) in tRNA + dimethylallyl diphosphate = N(6)-dimethylallyladenosine(37) in tRNA + diphosphate. In terms of biological role, catalyzes the transfer of a dimethylallyl group onto the adenine at position 37 in tRNAs that read codons beginning with uridine, leading to the formation of N6-(dimethylallyl)adenosine (i(6)A). The polypeptide is tRNA dimethylallyltransferase (Gluconacetobacter diazotrophicus (strain ATCC 49037 / DSM 5601 / CCUG 37298 / CIP 103539 / LMG 7603 / PAl5)).